Consider the following 284-residue polypeptide: Shikimate kinase (284 aa).

Residue 85–95 (PLAAGLKSSSA) participates in ATP binding.

Belongs to the GHMP kinase family. Archaeal shikimate kinase subfamily.

Its subcellular location is the cytoplasm. It catalyses the reaction shikimate + ATP = 3-phosphoshikimate + ADP + H(+). It participates in metabolic intermediate biosynthesis; chorismate biosynthesis; chorismate from D-erythrose 4-phosphate and phosphoenolpyruvate: step 5/7. In Halobacterium salinarum (strain ATCC 29341 / DSM 671 / R1), this protein is Shikimate kinase.